Consider the following 306-residue polypeptide: Non-specific ribonucleoside hydrolase RihC (306 aa).

His235 is an active-site residue.

Belongs to the IUNH family. RihC subfamily.

Its function is as follows. Hydrolyzes both purine and pyrimidine ribonucleosides with a broad-substrate specificity. The chain is Non-specific ribonucleoside hydrolase RihC from Salmonella paratyphi B (strain ATCC BAA-1250 / SPB7).